The following is a 692-amino-acid chain: Proprotein convertase subtilisin/kexin type 9 (692 aa).

The N-terminal stretch at 1 to 30 is a signal peptide; sequence MGTVSSRRSWWPLPLPLLLLLLLGPAGARA. A propeptide spanning residues 31 to 152 is cleaved from the precursor; it reads QEDEDGDYEE…IEEDSSVFAQ (122 aa). Tyrosine 38 is subject to Sulfotyrosine. Serine 47 carries the phosphoserine modification. Residues 77 to 149 enclose the Inhibitor I9 domain; the sequence is TYVVVLKEET…VDYIEEDSSV (73 aa). The Peptidase S8 domain occupies 155–444; sequence PWNLERITPA…VLTPNLVAAL (290 aa). Catalysis depends on charge relay system residues aspartate 186 and histidine 226. Cystine bridges form between cysteine 223-cysteine 255 and cysteine 323-cysteine 358. Serine 386 acts as the Charge relay system in catalysis. The segment at 450–692 is C-terminal domain; it reads RAGWQLFCRT…HLVQASQELQ (243 aa). Cystine bridges form between cysteine 457–cysteine 527, cysteine 477–cysteine 526, and cysteine 486–cysteine 509. A glycan (N-linked (GlcNAc...) asparagine) is linked at asparagine 533. 6 disulfide bridges follow: cysteine 534–cysteine 601, cysteine 552–cysteine 600, cysteine 562–cysteine 588, cysteine 608–cysteine 679, cysteine 626–cysteine 678, and cysteine 635–cysteine 654. Serine 688 carries the post-translational modification Phosphoserine.

Belongs to the peptidase S8 family. Monomer. Can self-associate to form dimers and higher multimers which may have increased LDLR degrading activity. The precursor protein but not the mature protein may form multimers. Interacts with APOB, VLDLR, LRP8/APOER2 and BACE1. The full-length immature form (pro-PCSK9) interacts with SCNN1A, SCNN1B and SCNN1G. The pro-PCSK9 form (via C-terminal domain) interacts with LDLR. Interacts (via the C-terminal domain) with ANXA2 (via repeat Annexin 1); the interaction inhibits the degradation of LDLR. It depends on Ca(2+) as a cofactor. Cleavage by furin and PCSK5 generates a truncated inactive protein that is unable to induce LDLR degradation. In terms of processing, undergoes autocatalytic cleavage in the endoplasmic reticulum to release the propeptide from the N-terminus and the cleavage of the propeptide is strictly required for its maturation and activation. The cleaved propeptide however remains associated with the catalytic domain through non-covalent interactions, preventing potential substrates from accessing its active site. As a result, it is secreted from cells as a propeptide-containing, enzymatically inactive protein. Post-translationally, phosphorylation protects the propeptide against proteolysis.

It localises to the cytoplasm. It is found in the secreted. Its subcellular location is the endosome. The protein localises to the lysosome. The protein resides in the cell surface. It localises to the endoplasmic reticulum. It is found in the golgi apparatus. Its proteolytic activity is autoinhibited by the non-covalent binding of the propeptide to the catalytic domain. Inhibited by EGTA. Its function is as follows. Crucial player in the regulation of plasma cholesterol homeostasis. Binds to low-density lipid receptor family members: low density lipoprotein receptor (LDLR), very low density lipoprotein receptor (VLDLR), apolipoprotein E receptor (LRP1/APOER) and apolipoprotein receptor 2 (LRP8/APOER2), and promotes their degradation in intracellular acidic compartments. Acts via a non-proteolytic mechanism to enhance the degradation of the hepatic LDLR through a clathrin LDLRAP1/ARH-mediated pathway. May prevent the recycling of LDLR from endosomes to the cell surface or direct it to lysosomes for degradation. Can induce ubiquitination of LDLR leading to its subsequent degradation. Inhibits intracellular degradation of APOB via the autophagosome/lysosome pathway in a LDLR-independent manner. Involved in the disposal of non-acetylated intermediates of BACE1 in the early secretory pathway. Inhibits epithelial Na(+) channel (ENaC)-mediated Na(+) absorption by reducing ENaC surface expression primarily by increasing its proteasomal degradation. Regulates neuronal apoptosis via modulation of LRP8/APOER2 levels and related anti-apoptotic signaling pathways. This chain is Proprotein convertase subtilisin/kexin type 9 (PCSK9), found in Macaca nemestrina (Pig-tailed macaque).